A 253-amino-acid polypeptide reads, in one-letter code: 3-deoxy-manno-octulosonate cytidylyltransferase (253 aa).

Belongs to the KdsB family.

The protein localises to the cytoplasm. The enzyme catalyses 3-deoxy-alpha-D-manno-oct-2-ulosonate + CTP = CMP-3-deoxy-beta-D-manno-octulosonate + diphosphate. It participates in nucleotide-sugar biosynthesis; CMP-3-deoxy-D-manno-octulosonate biosynthesis; CMP-3-deoxy-D-manno-octulosonate from 3-deoxy-D-manno-octulosonate and CTP: step 1/1. The protein operates within bacterial outer membrane biogenesis; lipopolysaccharide biosynthesis. Functionally, activates KDO (a required 8-carbon sugar) for incorporation into bacterial lipopolysaccharide in Gram-negative bacteria. The protein is 3-deoxy-manno-octulosonate cytidylyltransferase of Neisseria meningitidis serogroup A / serotype 4A (strain DSM 15465 / Z2491).